The following is a 240-amino-acid chain: Tetraspanin-1 (240 aa).

The Cytoplasmic segment spans residues 1–9 (MQCFSFIKT). Residues 10–30 (IMILFNLLIFLCGAALLAVGI) form a helical membrane-spanning segment. The Extracellular segment spans residues 31–52 (WVSIDGASFLKIFGPLSSSAMQ). A helical membrane pass occupies residues 53-73 (FVNVGYFLIAAGAVVFALGFL). The Cytoplasmic portion of the chain corresponds to 74–88 (GCYGAQTESKCALMT). A helical transmembrane segment spans residues 89 to 109 (FFFILLLIFIAEVAAAVVALV). Topologically, residues 110–210 (YTTMAEHFLT…QQLLYDIRTN (101 aa)) are extracellular. Asn-154 is a glycosylation site (N-linked (GlcNAc...) asparagine). The chain crosses the membrane as a helical span at residues 211–231 (AVTVGGVAAGIGGLELAAMIV). The Cytoplasmic portion of the chain corresponds to 232–240 (SMYLYCNLQ).

This sequence belongs to the tetraspanin (TM4SF) family. As to quaternary structure, interacts with SLC19A2. Interacts with NTRK1/TRKA.

It is found in the lysosome membrane. Its function is as follows. Structural component of specialized membrane microdomains known as tetraspanin-enriched microdomains (TERMs), which act as platforms for receptor clustering and signaling. Participates thereby in diverse biological functions such as cell signal transduction, adhesion, migration and protein trafficking. Regulates neuronal differentiation in response to NGF by facilitating NGF-mediated activation of NTRK1/TRKA receptor tyrosine kinase and subsequent downstream signaling pathways. Plays a role in the inhibition of TNFalpha-induced apoptosis. Mechanistically, inhibits the NF-kappa-B signaling pathway by blocking phosphorylation of CHUK. Also promotes the stability of the thiamine transporter 1/SLC19A2 in intestinal epithelial cells leading to an increase of thiamine uptake process. The chain is Tetraspanin-1 (TSPAN1) from Macaca fascicularis (Crab-eating macaque).